Here is a 332-residue protein sequence, read N- to C-terminus: MVCTTLYTVCVILCILLMYIILFRKMIHFLIDLSLIAFVISSCIRLSNAQFFANDMLYNGNVEGVINTTNIFNVESLCIYFPNSAVGRPGPGKSDGLINDNNYAQTLAVLFETKGFPKGSVNFNTYTKISDFINSIEMTCSYNIVIIPETLANSETIEQVAEWVLNVWKCDNMNVDIYTYEQIGKDNFWAAFGEDCDVAVCPLDTTMNGIGCTPASTETYEVLSNDTQLALIDVVDNVKHRIQLNQVTCKLRNCVKGEARLNTAIVRISNLSSFDNSLSPLNNGQKTRSFKINAKKWWKIFYTIIDYINTFIQSMTPRHRAIYPEGWMLRYA.

Residues 1–49 (MVCTTLYTVCVILCILLMYIILFRKMIHFLIDLSLIAFVISSCIRLSNA) form the signal peptide.

The protein belongs to the rotavirus VP7 family. As to quaternary structure, homotrimer; disulfide-linked. 2 Ca(2+) ions bound at each subunit interface in the trimer hold the trimer together. Interacts with the intermediate capsid protein VP6. Interacts with the outer capsid protein VP5*. N-glycosylated. Post-translationally, intramolecular disulfide bonds.

Its subcellular location is the virion. It is found in the host endoplasmic reticulum lumen. Functionally, calcium-binding protein that interacts with rotavirus cell receptors once the initial attachment by VP4 has been achieved. Rotavirus attachment and entry into the host cell probably involves multiple sequential contacts between the outer capsid proteins VP4 and VP7, and the cell receptors. Following entry into the host cell, low intracellular or intravesicular Ca(2+) concentration probably causes the calcium-stabilized VP7 trimers to dissociate from the virion. This step is probably necessary for the membrane-disrupting entry step and the release of VP4, which is locked onto the virion by VP7. The polypeptide is Outer capsid glycoprotein VP7 (Rotavirus C (isolate RVC/Cow/Japan/Shintoku/1991/G2P[3]) (RV-C)).